The following is a 539-amino-acid chain: Carboxypeptidase Y homolog A (539 aa).

An N-terminal signal peptide occupies residues Met-1–Val-17. Positions Pro-18–Lys-122 are excised as a propeptide. Cystine bridges form between Cys-176/Cys-416, Cys-310/Cys-324, Cys-334/Cys-357, Cys-341/Cys-350, and Cys-379/Cys-386. N-linked (GlcNAc...) asparagine glycosylation is present at Asn-207. Ser-263 is an active-site residue. Asp-455 is an active-site residue. N-linked (GlcNAc...) asparagine glycosylation is present at Asn-506. Residue His-517 is part of the active site.

The protein belongs to the peptidase S10 family.

It is found in the vacuole. The enzyme catalyses Release of a C-terminal amino acid with broad specificity.. Its function is as follows. Vacuolar carboxypeptidase involved in degradation of small peptides. Digests preferentially peptides containing an aliphatic or hydrophobic residue in P1' position, as well as methionine, leucine or phenylalanine in P1 position of ester substrate. The chain is Carboxypeptidase Y homolog A (cpyA) from Coccidioides posadasii (strain C735) (Valley fever fungus).